The sequence spans 339 residues: Putative clathrin assembly protein At1g14686 (339 aa).

The ENTH domain maps to 16-148 (SLIAADDILT…ILFHDGNRHR (133 aa)). Residues 283-307 (ESSEESAERTEIAEEEEEEEEEIET) are disordered. Residues 295–305 (AEEEEEEEEEI) show a composition bias toward acidic residues.

Its subcellular location is the membrane. It localises to the clathrin-coated pit. The protein localises to the golgi apparatus. The protein resides in the cytoplasmic vesicle. It is found in the clathrin-coated vesicle. The sequence is that of Putative clathrin assembly protein At1g14686 from Arabidopsis thaliana (Mouse-ear cress).